The following is a 450-amino-acid chain: tRNA-2-methylthio-N(6)-dimethylallyladenosine synthase (450 aa).

Residues 7-127 enclose the MTTase N-terminal domain; it reads KRLYIKTYGC…LPELIARAHR (121 aa). Residues C16, C52, C90, C165, C169, and C172 each contribute to the [4Fe-4S] cluster site. One can recognise a Radical SAM core domain in the interval 151–378; it reads QVSGVSAFLT…NQLLDEQQKA (228 aa). Residues 381–443 enclose the TRAM domain; that stretch reads ILQVGKTMPV…KMSLGGVLET (63 aa).

It belongs to the methylthiotransferase family. MiaB subfamily. In terms of assembly, monomer. [4Fe-4S] cluster is required as a cofactor.

Its subcellular location is the cytoplasm. It catalyses the reaction N(6)-dimethylallyladenosine(37) in tRNA + (sulfur carrier)-SH + AH2 + 2 S-adenosyl-L-methionine = 2-methylsulfanyl-N(6)-dimethylallyladenosine(37) in tRNA + (sulfur carrier)-H + 5'-deoxyadenosine + L-methionine + A + S-adenosyl-L-homocysteine + 2 H(+). In terms of biological role, catalyzes the methylthiolation of N6-(dimethylallyl)adenosine (i(6)A), leading to the formation of 2-methylthio-N6-(dimethylallyl)adenosine (ms(2)i(6)A) at position 37 in tRNAs that read codons beginning with uridine. The protein is tRNA-2-methylthio-N(6)-dimethylallyladenosine synthase of Caulobacter sp. (strain K31).